The following is a 470-amino-acid chain: Probable citrate synthase, mitochondrial (470 aa).

Active-site residues include H297, H351, and D406.

The protein belongs to the citrate synthase family. As to quaternary structure, homodimer.

It is found in the mitochondrion matrix. The catalysed reaction is oxaloacetate + acetyl-CoA + H2O = citrate + CoA + H(+). The protein operates within carbohydrate metabolism; tricarboxylic acid cycle; isocitrate from oxaloacetate: step 1/2. This chain is Probable citrate synthase, mitochondrial, found in Leishmania infantum.